The following is an 881-amino-acid chain: Phosphoenolpyruvate carboxylase (881 aa).

Active-site residues include H142 and K547.

This sequence belongs to the PEPCase type 1 family. The cofactor is Mg(2+).

It catalyses the reaction oxaloacetate + phosphate = phosphoenolpyruvate + hydrogencarbonate. In terms of biological role, forms oxaloacetate, a four-carbon dicarboxylic acid source for the tricarboxylic acid cycle. In Hahella chejuensis (strain KCTC 2396), this protein is Phosphoenolpyruvate carboxylase.